Reading from the N-terminus, the 1414-residue chain is DNA-directed RNA polymerase subunit beta' (1414 aa).

Residues Cys70, Cys72, Cys85, and Cys88 each contribute to the Zn(2+) site. Positions 461, 463, and 465 each coordinate Mg(2+). Cys820, Cys894, Cys901, and Cys904 together coordinate Zn(2+).

It belongs to the RNA polymerase beta' chain family. As to quaternary structure, the RNAP catalytic core consists of 2 alpha, 1 beta, 1 beta' and 1 omega subunit. When a sigma factor is associated with the core the holoenzyme is formed, which can initiate transcription. Requires Mg(2+) as cofactor. It depends on Zn(2+) as a cofactor.

The catalysed reaction is RNA(n) + a ribonucleoside 5'-triphosphate = RNA(n+1) + diphosphate. Its function is as follows. DNA-dependent RNA polymerase catalyzes the transcription of DNA into RNA using the four ribonucleoside triphosphates as substrates. This chain is DNA-directed RNA polymerase subunit beta', found in Cupriavidus taiwanensis (strain DSM 17343 / BCRC 17206 / CCUG 44338 / CIP 107171 / LMG 19424 / R1) (Ralstonia taiwanensis (strain LMG 19424)).